The primary structure comprises 124 residues: Late embryogenesis abundant protein 37 (124 aa).

The transit peptide at 1–35 directs the protein to the mitochondrion; sequence MSQSLFNLKSLSRSINNTIRMRRYIVITKASQRAY.

It belongs to the LEA type 3 family.

The protein localises to the mitochondrion. In Arabidopsis thaliana (Mouse-ear cress), this protein is Late embryogenesis abundant protein 37.